Here is a 146-residue protein sequence, read N- to C-terminus: MMFEKTLSILKPDVVERGIIGRVLSYIEAAGLRIVAQRMCALSHEQAEAFYAVHKARPFFPSLVGFMTSGPVVVQVLVGESAVKTYRDVMGATNPSEAAPGTIRGDLAESIDANCVHGSDSLENAEWEIKFFFKEHEIMSSMPNGK.

ATP-binding residues include Lys-11, Phe-59, Arg-87, Thr-93, Arg-104, and Asn-114. The active-site Pros-phosphohistidine intermediate is His-117.

The protein belongs to the NDK family. In terms of assembly, homotetramer. Mg(2+) serves as cofactor.

Its subcellular location is the cytoplasm. It carries out the reaction a 2'-deoxyribonucleoside 5'-diphosphate + ATP = a 2'-deoxyribonucleoside 5'-triphosphate + ADP. It catalyses the reaction a ribonucleoside 5'-diphosphate + ATP = a ribonucleoside 5'-triphosphate + ADP. Its function is as follows. Major role in the synthesis of nucleoside triphosphates other than ATP. The ATP gamma phosphate is transferred to the NDP beta phosphate via a ping-pong mechanism, using a phosphorylated active-site intermediate. This chain is Nucleoside diphosphate kinase, found in Anaplasma marginale (strain Florida).